Here is a 20-residue protein sequence, read N- to C-terminus: FLPLLLAGLPKLLCLFFKKC.

C14 and C20 are disulfide-bonded.

Expressed by the skin glands.

It is found in the secreted. Antimicrobial peptide. Has low activity against the Gram-positive bacterium S.aureus and the Gram-negative bacterium E.coli (MIC&lt;15 uM). Has a strong hemolytic activity. This is Brevinin-1DYc from Rana dybowskii (Dybovsky's frog).